The chain runs to 218 residues: MGRVFLTGEKANSILKRYPRANGFFEEIRQGNIERECKEEFCTFEEAREAFENNEKTKEFWSTYTKAQQGESNRGSDWFQFYLTFPLIFGLFIILLVIFLIWRCFLRNKTRRQTVTEGHIPFPQHLNIITPPPPPDEVFDSSGLSPGFLGYVVGRSDSVSTRLSNCDPPPTYEEATGQVNLQRSETEPHLDPPPEYEDIVNSNSASAIPMVPVVTTIK.

The propeptide occupies 1 to 20 (MGRVFLTGEKANSILKRYPR). Residues 21 to 66 (ANGFFEEIRQGNIERECKEEFCTFEEAREAFENNEKTKEFWSTYTK) form the Gla domain. Over 21 to 83 (ANGFFEEIRQ…RGSDWFQFYL (63 aa)) the chain is Extracellular. A disulfide bridge connects residues cysteine 37 and cysteine 42. The chain crosses the membrane as a helical span at residues 84-106 (TFPLIFGLFIILLVIFLIWRCFL). Residues 107 to 218 (RNKTRRQTVT…PMVPVVTTIK (112 aa)) are Cytoplasmic-facing. Residues 161 to 195 (TRLSNCDPPPTYEEATGQVNLQRSETEPHLDPPPE) are disordered.

Gla residues are produced after subsequent post-translational modifications of glutamate by a vitamin K-dependent gamma-carboxylase. As to expression, highly expressed in the spinal cord.

It localises to the membrane. The chain is Transmembrane gamma-carboxyglutamic acid protein 1 (PRRG1) from Homo sapiens (Human).